Reading from the N-terminus, the 918-residue chain is Importin subunit beta-2 (918 aa).

HEAT repeat units follow at residues 11-38, 43-92, 103-137, 145-181, 190-222, 235-263, 275-303, 320-413, 421-449, 461-488, 501-534, 542-577, 583-620, 628-678, 694-725, 777-814, 825-858, and 867-900; these read YVLQ…EAME, QPEF…GGNN, YVKS…TYYR, GLQM…FQLE, EALL…TVIP, FLEI…SFLL, DGIV…FLHA, KDIV…MTNI, IAFP…GAMA, PALI…TLSR, LIPV…IENA, LFYS…AEKC, AMQI…SSLG, PEVY…GLGA, ILKI…YFFN, IDMS…LTHP, DSNW…INLT, and DTIH…SAQI. Residues 361 to 395 form a disordered region; the sequence is APRIVKKKEAGNGEDADDNEDDDDDDDDEDGDVDT. Residues 372–393 are compositionally biased toward acidic residues; sequence NGEDADDNEDDDDDDDDEDGDV.

Belongs to the importin beta family. Importin beta-2 subfamily. Interacts with Ran (GSP1); interacts specifically with the GTP-bound form of Ran (GTP-Ran), protecting it from GTP hydrolysis and nucleotide exchange. Interacts with nucleoporins NUP1, NUP100 and NUP116. Interacts with NAB2 and HRP1/NAB4; via their rg-NLS. Interacts with TFG2; via its PY-NLS.

It is found in the cytoplasm. Its subcellular location is the nucleus. The protein resides in the nuclear pore complex. Functions in nuclear protein import as nuclear transport receptor. Serves as receptor for arginine/glycine-rich nuclear localization signals (rg-NLS) and PY-NLS in cargo substrates. Its predominant cargo substrate seems to be mRNA-binding proteins. Required for nuclear transport of NAB2, HRP1/NAB4 and TFG2. Mediates docking of the importin/substrate complex to the nuclear pore complex (NPC) through binding to repeat-containing nucleoporins. The complex is subsequently translocated through the pore by an energy requiring, Ran-dependent mechanism. At the nucleoplasmic side of the NPC, GTP-Ran binding leads to release of the cargo. Efficient GTP-Ran-mediated substrate release requires RNA. The importin is re-exported from the nucleus to the cytoplasm where GTP hydrolysis releases Ran from importin. The directionality of nuclear import is thought to be conferred by an asymmetric distribution of the GTP- and GDP-bound forms of Ran between the cytoplasm and nucleus. The chain is Importin subunit beta-2 from Saccharomyces cerevisiae (strain ATCC 204508 / S288c) (Baker's yeast).